The following is an 88-amino-acid chain: uncharacterized protein (88 aa).

The next 2 membrane-spanning stretches (helical) occupy residues 27 to 46 (LFIFRVLNVVSIAILFETPH) and 61 to 83 (SMCLYNCYCLYNVVTFSLNLILI).

It localises to the membrane. This is an uncharacterized protein from Saccharomyces cerevisiae (strain ATCC 204508 / S288c) (Baker's yeast).